The primary structure comprises 253 residues: Chitooligosaccharide deacetylase (253 aa).

The Mg(2+) site is built by histidine 61 and histidine 125.

It belongs to the YdjC deacetylase family. ChbG subfamily. Homodimer. It depends on Mg(2+) as a cofactor.

The protein localises to the cytoplasm. It catalyses the reaction N,N'-diacetylchitobiose + H2O = N-acetyl-beta-D-glucosaminyl-(1-&gt;4)-D-glucosamine + acetate. The enzyme catalyses diacetylchitobiose-6'-phosphate + H2O = N'-monoacetylchitobiose-6'-phosphate + acetate. The protein operates within glycan degradation; chitin degradation. In terms of biological role, involved in the degradation of chitin. ChbG is essential for growth on the acetylated chitooligosaccharides chitobiose and chitotriose but is dispensable for growth on cellobiose and chitosan dimer, the deacetylated form of chitobiose. Deacetylation of chitobiose-6-P and chitotriose-6-P is necessary for both the activation of the chb promoter by the regulatory protein ChbR and the hydrolysis of phosphorylated beta-glucosides by the phospho-beta-glucosidase ChbF. Catalyzes the removal of only one acetyl group from chitobiose-6-P to yield monoacetylchitobiose-6-P, the inducer of ChbR and the substrate of ChbF. This Proteus mirabilis (strain HI4320) protein is Chitooligosaccharide deacetylase.